The sequence spans 322 residues: Helix-loop-helix 34 (322 aa).

Basic and acidic residues predominate over residues 1–11; the sequence is METNLSEEKQK. The segment at 1–23 is disordered; it reads METNLSEEKQKPSKSQAQQRRQM. One can recognise a bHLH domain in the interval 8-62; that stretch reads EKQKPSKSQAQQRRQMENYEFSQLANELPLARAISGQHIDKTTMVRLATAYIKLH. 2 PAS domains span residues 82–152 and 203–276; these read DSLW…DLNW and PTPV…FNLG.

As to quaternary structure, efficient DNA binding requires dimerization with another bHLH protein. As to expression, expressed in a small subset of neurons, probably AVJL and AVJR. Expressed in the AVH neurons.

The protein resides in the nucleus. In terms of biological role, transcription factor. Involved in specifying AVH neuron identity, acting in concert with unc-42. Involved in serotonin-mediated feeding behavior, probably acting by modulating expression of genes involved in glutamate signaling. This Caenorhabditis elegans protein is Helix-loop-helix 34 (hlh-34).